The following is a 214-amino-acid chain: Cutinase CUT2 (214 aa).

The signal sequence occupies residues 1–18 (MQFSLSIATAILAATASA). Cysteines 40 and 117 form a disulfide. Ser128 acts as the Nucleophile in catalysis. Cys179 and Cys186 are oxidised to a cystine. The active site involves Asp183. His196 serves as the catalytic Proton donor/acceptor.

The protein belongs to the cutinase family. Post-translationally, the 2 disulfide bonds play a critical role in holding the catalytic residues in juxta-position; reduction of the disulfide bridges results in the complete inactivation of the enzyme.

The protein localises to the secreted. It catalyses the reaction cutin + H2O = cutin monomers.. Its function is as follows. Catalyzes the hydrolysis of complex carboxylic polyesters found in the cell wall of plants. Degrades cutin, a macromolecule that forms the structure of the plant cuticle. Required for efficient penetration of the host plant cuticle by the appressorium during the initial stage of fungal infection. The protein is Cutinase CUT2 of Pyricularia oryzae (strain 70-15 / ATCC MYA-4617 / FGSC 8958) (Rice blast fungus).